We begin with the raw amino-acid sequence, 405 residues long: Aspartokinase (405 aa).

ACT domains lie at 267 to 344 and 345 to 405; these read VSME…AKVS and IVGV…QLDQ.

This sequence belongs to the aspartokinase family.

The catalysed reaction is L-aspartate + ATP = 4-phospho-L-aspartate + ADP. The protein operates within amino-acid biosynthesis; L-lysine biosynthesis via DAP pathway; (S)-tetrahydrodipicolinate from L-aspartate: step 1/4. It functions in the pathway amino-acid biosynthesis; L-methionine biosynthesis via de novo pathway; L-homoserine from L-aspartate: step 1/3. Its pathway is amino-acid biosynthesis; L-threonine biosynthesis; L-threonine from L-aspartate: step 1/5. The sequence is that of Aspartokinase (lysC) from Helicobacter pylori (strain J99 / ATCC 700824) (Campylobacter pylori J99).